The chain runs to 369 residues: tRNA/tmRNA (uracil-C(5))-methyltransferase (369 aa).

S-adenosyl-L-methionine-binding residues include glutamine 190, tyrosine 218, asparagine 223, glutamate 239, and aspartate 301. The active-site Nucleophile is the cysteine 326. Catalysis depends on glutamate 360, which acts as the Proton acceptor.

The protein belongs to the class I-like SAM-binding methyltransferase superfamily. RNA M5U methyltransferase family. TrmA subfamily.

It carries out the reaction uridine(54) in tRNA + S-adenosyl-L-methionine = 5-methyluridine(54) in tRNA + S-adenosyl-L-homocysteine + H(+). The enzyme catalyses uridine(341) in tmRNA + S-adenosyl-L-methionine = 5-methyluridine(341) in tmRNA + S-adenosyl-L-homocysteine + H(+). In terms of biological role, dual-specificity methyltransferase that catalyzes the formation of 5-methyluridine at position 54 (m5U54) in all tRNAs, and that of position 341 (m5U341) in tmRNA (transfer-mRNA). This Vibrio cholerae serotype O1 (strain ATCC 39541 / Classical Ogawa 395 / O395) protein is tRNA/tmRNA (uracil-C(5))-methyltransferase.